A 67-amino-acid chain; its full sequence is Large ribosomal subunit protein bL32 (67 aa).

A disordered region spans residues 1 to 44 (MAVQQNRKSPSKRDMRRSHDALGFSTLSTDSKSGERHRRHHVTK). Residues 11 to 20 (SKRDMRRSHD) show a composition bias toward basic and acidic residues.

This sequence belongs to the bacterial ribosomal protein bL32 family.

The protein is Large ribosomal subunit protein bL32 of Dichelobacter nodosus (strain VCS1703A).